The following is a 418-amino-acid chain: Glutamyl-tRNA reductase (418 aa).

Substrate contacts are provided by residues 51-54, Ser-107, 112-114, and Gln-118; these read TCNR and EPQ. The active-site Nucleophile is Cys-52. 187 to 192 provides a ligand contact to NADP(+); sequence GAGETA.

The protein belongs to the glutamyl-tRNA reductase family. In terms of assembly, homodimer.

It catalyses the reaction (S)-4-amino-5-oxopentanoate + tRNA(Glu) + NADP(+) = L-glutamyl-tRNA(Glu) + NADPH + H(+). It participates in porphyrin-containing compound metabolism; protoporphyrin-IX biosynthesis; 5-aminolevulinate from L-glutamyl-tRNA(Glu): step 1/2. In terms of biological role, catalyzes the NADPH-dependent reduction of glutamyl-tRNA(Glu) to glutamate 1-semialdehyde (GSA). This is Glutamyl-tRNA reductase from Dichelobacter nodosus (strain VCS1703A).